The sequence spans 102 residues: MTQAFFFLLLVSLVASTLSKEFNFCPRAIDEVCPVKEKRNECCSSKECRFGEMCCSEPCGNVCRVKSDTPLGFPAKEDSNCKVGEIKKKWYQKVWSKITKWG.

A signal peptide spans 1 to 19 (MTQAFFFLLLVSLVASTLS). The propeptide occupies 20 to 39 (KEFNFCPRAIDEVCPVKEKR). Tryptophan 101 bears the Tryptophan amide mark.

Belongs to the venom protein 11 family. 02 (wap-2) subfamily. In terms of processing, contains 5 disulfide bonds. As to expression, expressed by the venom gland.

Its subcellular location is the secreted. The protein is U7-agatoxin-Ao1a of Agelena orientalis (Funnel-web spider).